The chain runs to 953 residues: Translation initiation factor IF-2 (953 aa).

Disordered stretches follow at residues 48 to 240 (SSFS…AQQE) and 279 to 363 (TKLK…TERK). 3 stretches are compositionally biased toward basic and acidic residues: residues 80–89 (TGSEHVEKTQ), 98–111 (FKAE…EQAA), and 140–188 (QGDK…ENHK). Residues 191-207 (RFTNQKKQGRQEPQSKS) show a composition bias toward polar residues. The span at 229-240 (RQSETRFRAQQE) shows a compositional bias: basic and acidic residues. A compositionally biased stretch (polar residues) spans 282-291 (KSSNISAKST). The span at 300-317 (ARPEKNRELTHHSQEGQK) shows a compositional bias: basic and acidic residues. A compositionally biased stretch (low complexity) spans 322–338 (SWNSQNQVRNQKNSNWN). Positions 339–348 (KNKKTKKGKN) are enriched in basic residues. Residues 454-623 (ERAPVVTIMG…LLVAEVEELK (170 aa)) form the tr-type G domain. The segment at 463-470 (GHVDHGKT) is G1. 463–470 (GHVDHGKT) provides a ligand contact to GTP. Positions 488–492 (GITQH) are G2. The segment at 509–512 (DTPG) is G3. Residues 509–513 (DTPGH) and 563–566 (NKID) each bind GTP. A G4 region spans residues 563-566 (NKID). Residues 599–601 (SAK) form a G5 region.

The protein belongs to the TRAFAC class translation factor GTPase superfamily. Classic translation factor GTPase family. IF-2 subfamily.

It is found in the cytoplasm. Functionally, one of the essential components for the initiation of protein synthesis. Protects formylmethionyl-tRNA from spontaneous hydrolysis and promotes its binding to the 30S ribosomal subunits. Also involved in the hydrolysis of GTP during the formation of the 70S ribosomal complex. The polypeptide is Translation initiation factor IF-2 (Streptococcus pyogenes serotype M1).